We begin with the raw amino-acid sequence, 286 residues long: ATP synthase gamma chain (286 aa).

Belongs to the ATPase gamma chain family. In terms of assembly, F-type ATPases have 2 components, CF(1) - the catalytic core - and CF(0) - the membrane proton channel. CF(1) has five subunits: alpha(3), beta(3), gamma(1), delta(1), epsilon(1). CF(0) has three main subunits: a, b and c.

It is found in the cell inner membrane. In terms of biological role, produces ATP from ADP in the presence of a proton gradient across the membrane. The gamma chain is believed to be important in regulating ATPase activity and the flow of protons through the CF(0) complex. This Shewanella oneidensis (strain ATCC 700550 / JCM 31522 / CIP 106686 / LMG 19005 / NCIMB 14063 / MR-1) protein is ATP synthase gamma chain.